Consider the following 169-residue polypeptide: Benzoate 1,2-dioxygenase subunit beta (169 aa).

This sequence belongs to the bacterial ring-hydroxylating dioxygenase beta subunit family. In terms of assembly, this dioxygenase system consists of three proteins: the two subunits of the hydroxylase (BenA and BenB), and an electron transfer component (BenC).

It catalyses the reaction benzoate + NADH + O2 + H(+) = (1R,6S)-1,6-dihydroxycyclohexa-2,4-diene-1-carboxylate + NAD(+). Its pathway is aromatic compound metabolism; benzoate degradation via hydroxylation; catechol from benzoate: step 1/2. Its function is as follows. Degradation of benzoate to 2-hydro-1,2-dihydroxybenzoate (DHB). The beta subunit may be responsible for the substrate specificity of the enzyme. In Acinetobacter baylyi (strain ATCC 33305 / BD413 / ADP1), this protein is Benzoate 1,2-dioxygenase subunit beta (benB).